The chain runs to 107 residues: Nucleoid-associated protein MCA1327 (107 aa).

This sequence belongs to the YbaB/EbfC family. As to quaternary structure, homodimer.

Its subcellular location is the cytoplasm. The protein localises to the nucleoid. Its function is as follows. Binds to DNA and alters its conformation. May be involved in regulation of gene expression, nucleoid organization and DNA protection. This chain is Nucleoid-associated protein MCA1327, found in Methylococcus capsulatus (strain ATCC 33009 / NCIMB 11132 / Bath).